Consider the following 1166-residue polypeptide: Calcium-activated potassium channel subunit alpha-1 (1166 aa).

Residues 1–15 (MANGGGGGGGGGGGS) show a composition bias toward gly residues. 2 disordered regions span residues 1–20 (MANG…LRMS) and 30–51 (LDAS…SVHE). The Extracellular portion of the chain corresponds to 1–74 (MANGGGGGGG…VPCDSRGQRM (74 aa)). The segment covering 33–48 (SSSSSSSSSSSSSSSS) has biased composition (low complexity). Residues 75-95 (WWAFLASSMVTFFGGLFIILL) traverse the membrane as a helical segment. Topologically, residues 96–166 (WRTLKYLWTV…MISAQTLTGR (71 aa)) are cytoplasmic. 3 S-palmitoyl cysteine lipidation sites follow: cysteine 106, cysteine 107, and cysteine 109. Threonine 139 bears the Phosphothreonine; by CamK2 mark. The chain crosses the membrane as a helical span at residues 167-187 (VLVVLVFALSIGALVIYFIDS). The Extracellular segment spans residues 188 to 202 (SNPIESCQNFYKDFT). A helical membrane pass occupies residues 203-223 (LQIDMAFNVFFLLYFGLRFIA). At 224 to 227 (ANDK) the chain is on the cytoplasmic side. Residues 228-248 (LWFWLEVNSVVDFFTVPPVFV) form a helical membrane-spanning segment. Residues 249–252 (SVYL) lie on the Extracellular side of the membrane. Residues 253–273 (NRSWLGLRFLRALRLIQFSEI) form a helical; Voltage-sensor membrane-spanning segment. Over 274-288 (LQFLNILKTSNSIKL) the chain is Cytoplasmic. A helical membrane pass occupies residues 289–309 (VNLLSIFISTWLTAAGFIHLV). Topologically, residues 310-323 (ENSGDPWENFQNNQ) are extracellular. The pore-forming intramembrane region spans 324–346 (ALTYWECVYLLMVTMSTVGYGDV). Residues 340–343 (TVGY) carry the Selectivity for potassium motif. Over 347 to 355 (YAKTTLGRL) the chain is Extracellular. Residues 356 to 376 (FMVFFILGGLAMFASYVPEII) form a helical membrane-spanning segment. The Cytoplasmic segment spans residues 377–1166 (ELIGNRKKYG…KQKYVQEERL (790 aa)). The 143-residue stretch at 395 to 537 (RKHIVVCGHI…WNWKEGDDAI (143 aa)) folds into the RCK N-terminal 1 domain. Positions 427, 450, and 452 each coordinate Mg(2+). Residues 544–564 (LGFIAQSCLAQGLSTMLANLF) form a segment S7 region. The segment S8 stretch occupies residues 601–621 (LSFPTVCELCFVKLKLLMIAI). Residues 665-669 (CKACH) form a heme-binding motif region. The disordered stretch occupies residues 689–717 (EQPSTLSPKKKQRNGGMRNSPSSSPKLMR). Residue threonine 693 is modified to Phosphothreonine. Phosphoserine is present on residues serine 695, serine 708, and serine 712. Residues 767 to 787 (VLSGHVVVCIFGDVSSALIGL) are segment S9. The region spanning 769–913 (SGHVVVCIFG…MDRSSPDNSP (145 aa)) is the RCK N-terminal 2 domain. The residue at position 900 (threonine 900) is a Phosphothreonine. A phosphoserine mark is found at serine 908 and serine 912. Positions 933 to 955 (TELVNDTNVQFLDQDDDDDPDTE) match the Calcium bowl motif. Residues glutamine 942, aspartate 945, aspartate 948, and aspartate 950 each contribute to the Ca(2+) site. Positions 962-982 (FACGTAFAVSVLDSLMSATYF) are segment S10. A compositionally biased stretch (low complexity) spans 1116 to 1141 (RASLSHSSHSSQSSSKKSSSVHSIPS). The disordered stretch occupies residues 1116-1166 (RASLSHSSHSSQSSSKKSSSVHSIPSTANRQNRPKSRESRDKQKYVQEERL). Residues 1150–1166 (KSRESRDKQKYVQEERL) show a composition bias toward basic and acidic residues. Phosphoserine; by PKG occurs at positions 1151 and 1154.

This sequence belongs to the potassium channel family. Calcium-activated (TC 1.A.1.3) subfamily. KCa1.1/KCNMA1 sub-subfamily. In terms of assembly, homotetramer; which constitutes the calcium-activated potassium channel. Interacts with beta subunits KCNMB1, KCNMB2, KCNMB3 and KCNMB4. Interacts with gamma subunits LRRC26, LRRC38, LRRC52 and LRRC55. Beta and gamma subunits are accessory, and modulate its activity. Interacts with RAB11B. Phosphorylated. Stimulated by PKG, but not by PKA. In smooth muscles, phosphorylation affects its activity. Post-translationally, phosphorylated. Exclusively stimulated by PKA. In smooth muscles, phosphorylation affects its activity. In terms of processing, incremental phosphorylation of Thr-139 of the KCNMA1 tetramer changes the response to ethanol from increased activation to inhibition of channel activity. Palmitoylation by ZDHHC22 and ZDHHC23 within the intracellular linker between the S0 and S1 transmembrane domains regulates localization to the plasma membrane. Depalmitoylated by LYPLA1 and LYPLAL1, leading to retard exit from the trans-Golgi network.

The protein resides in the cell membrane. It catalyses the reaction K(+)(in) = K(+)(out). Its activity is regulated as follows. Ethanol and carbon monoxide-bound heme increase channel activation. Heme inhibits channel activation. Phosphorylation of Thr-139 leads to inhibition of channel activity by ethanol. Its function is as follows. Potassium channel activated by both membrane depolarization or increase in cytosolic Ca(2+) that mediates export of K(+). It is also activated by concentration of cytosolic Mg(2+). Its activation dampens the excitatory events that elevate the cytosolic Ca(2+) concentration and/or depolarize the cell membrane. It therefore contributes to repolarization of the membrane potential. Plays a key role in controlling excitability in a number of systems, such as regulation of the contraction of smooth muscle, the tuning of hair cells in the cochlea, regulation of transmitter release, and innate immunity. In smooth muscles, its activation by high level of Ca(2+), caused by ryanodine receptors in the sarcoplasmic reticulum, regulates the membrane potential. In cochlea cells, its number and kinetic properties partly determine the characteristic frequency of each hair cell and thereby helps to establish a tonotopic map. Kinetics of KCNMA1 channels are determined by alternative splicing, phosphorylation status and its combination with modulating beta subunits. Highly sensitive to both iberiotoxin (IbTx) and charybdotoxin (CTX). The sequence is that of Calcium-activated potassium channel subunit alpha-1 (KCNMA1) from Bos taurus (Bovine).